Reading from the N-terminus, the 763-residue chain is 1,4-alpha-glucan branching enzyme GlgB (763 aa).

Asp-437 functions as the Nucleophile in the catalytic mechanism. Glu-488 acts as the Proton donor in catalysis.

Belongs to the glycosyl hydrolase 13 family. GlgB subfamily. Monomer.

It catalyses the reaction Transfers a segment of a (1-&gt;4)-alpha-D-glucan chain to a primary hydroxy group in a similar glucan chain.. The protein operates within glycan biosynthesis; glycogen biosynthesis. Catalyzes the formation of the alpha-1,6-glucosidic linkages in glycogen by scission of a 1,4-alpha-linked oligosaccharide from growing alpha-1,4-glucan chains and the subsequent attachment of the oligosaccharide to the alpha-1,6 position. The sequence is that of 1,4-alpha-glucan branching enzyme GlgB from Synechococcus sp. (strain JA-2-3B'a(2-13)) (Cyanobacteria bacterium Yellowstone B-Prime).